A 351-amino-acid polypeptide reads, in one-letter code: uncharacterized protein (351 aa).

An N-terminal signal peptide occupies residues 1 to 27 (MKNKKRVLIASSLSCAILLLSAATTQA). The disordered stretch occupies residues 27–71 (ANSAHKDSQDQNKKEHVDKSQQKDKRNVTNKDKNSTAPDDIGKNG). The span at 30–60 (AHKDSQDQNKKEHVDKSQQKDKRNVTNKDKN) shows a compositional bias: basic and acidic residues.

The protein belongs to the aerolysin family.

This is an uncharacterized protein from Staphylococcus aureus (strain USA300).